The sequence spans 506 residues: MDLRPEEVSAIIKQQIDKYGNKSHVDDVGYVLQAGDGIARVYGLNNCMSGELLEFENGVFGMAMNLEEDNIGCVLFRGERDVKEGTLVKRTGKTVEVPVGKALIGRVIDPLGNPLDGKGEIETEKFRPIEYPAPSVMDRKPVNRPLQTGIMAIDAMVPIGRGQRELIIGDRQTGKTAIAVDTILNQKGKDVICIYVAIGQKASSVAEVINTLEEGGAMEYTVVVSSTASEMPTLQYIAPYAGCSIAEEFMYNDHKDVLIVYDDLSKHAVAYRAMSLLLRRPPGREAYPGDVFYLHSRLLERAAQLSDELGGGSITALPIIETQVGDVSAYIPTNVISITDGQIYLETELFYSGQRPAVNVGLSVSRVGGAAQIKAMKKVAGALRINLAQYRELAVFAQFGSDLDKVTKDKLIQGERLVESLKQSRRATMPVEDQVIVLYMATNKYLMDLPVKEVRSFNKEFVKFVNSNYPEIPNEIRATGDLSSETENMLKKAAEEFKDQYLRTKR.

169–176 (GDRQTGKT) contacts ATP.

Belongs to the ATPase alpha/beta chains family. F-type ATPases have 2 components, CF(1) - the catalytic core - and CF(0) - the membrane proton channel. CF(1) has five subunits: alpha(3), beta(3), gamma(1), delta(1), epsilon(1). CF(0) has three main subunits: a(1), b(2) and c(9-12). The alpha and beta chains form an alternating ring which encloses part of the gamma chain. CF(1) is attached to CF(0) by a central stalk formed by the gamma and epsilon chains, while a peripheral stalk is formed by the delta and b chains.

Its subcellular location is the cell membrane. The enzyme catalyses ATP + H2O + 4 H(+)(in) = ADP + phosphate + 5 H(+)(out). In terms of biological role, produces ATP from ADP in the presence of a proton gradient across the membrane. The alpha chain is a regulatory subunit. The sequence is that of ATP synthase subunit alpha from Acetivibrio thermocellus (strain ATCC 27405 / DSM 1237 / JCM 9322 / NBRC 103400 / NCIMB 10682 / NRRL B-4536 / VPI 7372) (Clostridium thermocellum).